The primary structure comprises 63 residues: Venom peptide 2a (63 aa).

Positions 1–22 (MRGTSFILFAVVVILGFLNANA) are cleaved as a signal peptide. AXPX repeat units lie at residues 22-25 (AEPL), 26-29 (ANPA), 32-35 (ANPD), 38-41 (ANPD), and 44-47 (ANPE). The propeptide occupies 23–48 (EPLANPAPLANPDPLANPDPLANPEA). Leu62 carries the post-translational modification Leucine amide.

Expressed by the venom gland.

It localises to the secreted. It is found in the target cell membrane. Antimicrobial peptide. Shows activities against Gram-positive bacteria (S.aureus MIC=50 uM and 200 ug/ml, and B.subtilis MIC=200 ug/ml), Gram-negative bacterium E.coli (MIC=100 uM and 200 ug/ml) and fungi (B.cinerea MIC=5 uM, S.cerevisiae MIC=128 ug/ml, S.pombe MIC=128 ug/ml, A.nidulans MIC=128 ug/ml, and C.albicans MIC=64-100 uM). Shows cytolytic activity against insect cell lines. Its hemolytic activity is controversial, as Baek and colleagues report no activity while Bea and colleagues note a hemolytic activity. In vivo, peptide injection in the vicinity of the head and thorax of lepidopteran larvae induces feeding disorder followed by death due to starvation. Is weakly lethal when tested on water flies (D.magna), but is not lethal on lady beetles (H.convergens). This is Venom peptide 2a from Eumenes pomiformis (Potter wasp).